We begin with the raw amino-acid sequence, 292 residues long: uncharacterized protein (292 aa).

The protein resides in the virion. This is an uncharacterized protein from Acanthamoeba polyphaga (Amoeba).